The sequence spans 306 residues: Agmatinase (306 aa).

The Mn(2+) site is built by histidine 126, aspartate 149, histidine 151, aspartate 153, aspartate 230, and aspartate 232.

Belongs to the arginase family. Agmatinase subfamily. Mn(2+) serves as cofactor.

It catalyses the reaction agmatine + H2O = urea + putrescine. Its pathway is amine and polyamine biosynthesis; putrescine biosynthesis via agmatine pathway; putrescine from agmatine: step 1/1. Functionally, catalyzes the formation of putrescine from agmatine. This Klebsiella pneumoniae (strain 342) protein is Agmatinase.